A 254-amino-acid polypeptide reads, in one-letter code: K88 minor fimbrial subunit FaeI (254 aa).

The first 20 residues, 1–20, serve as a signal peptide directing secretion; the sequence is MKKVTLFLFVVSLLPSTVLA.

It belongs to the fimbrial K88 protein family.

The protein localises to the fimbrium. In terms of biological role, K88 minor fimbrial subunit, plays an essential role in the biogenesis of the K88 fimbriae. Fimbriae (also called pili), are polar filaments radiating from the surface of the bacterium to a length of 0.5-1.5 micrometers and numbering 100-300 per cell. They enable bacteria to colonize the epithelium of specific host organs. The polypeptide is K88 minor fimbrial subunit FaeI (faeI) (Escherichia coli).